The primary structure comprises 494 residues: Hepatic triacylglycerol lipase (494 aa).

Residues 1-21 form the signal peptide; it reads MGNHLQISVSLVLCIFIQSSA. Residue N79 is glycosylated (N-linked (GlcNAc...) asparagine). The active-site Nucleophile is S169. Catalysis depends on D195, which acts as the Charge relay system. Positions 255-278 are essential for determining substrate specificity; sequence CHFLELYKHIAEHGLNAITQTINC. The Charge relay system role is filled by H280. One can recognise a PLAT domain in the interval 353-487; it reads YHYQFKIQFI…HPTQEKVFVK (135 aa). Residue N398 is glycosylated (N-linked (GlcNAc...) asparagine).

This sequence belongs to the AB hydrolase superfamily. Lipase family. As to quaternary structure, homodimer.

It is found in the secreted. The enzyme catalyses a triacylglycerol + H2O = a diacylglycerol + a fatty acid + H(+). It carries out the reaction a 1-acyl-sn-glycero-3-phosphocholine + H2O = sn-glycerol 3-phosphocholine + a fatty acid + H(+). The catalysed reaction is a 1,2-diacyl-sn-glycero-3-phosphocholine + H2O = a 2-acyl-sn-glycero-3-phosphocholine + a fatty acid + H(+). It catalyses the reaction 1,2-di-(9Z-octadecenoyl)-sn-glycerol + H2O = 2-(9Z-octadecenoyl)-glycerol + (9Z)-octadecenoate + H(+). The enzyme catalyses 1,2,3-tri-(9Z-octadecenoyl)-glycerol + H2O = 2,3-di-(9Z)-octadecenoyl-sn-glycerol + (9Z)-octadecenoate + H(+). It carries out the reaction 1-(9Z-octadecenoyl)-sn-glycero-3-phospho-L-serine + H2O = sn-glycero-3-phospho-L-serine + (9Z)-octadecenoate + H(+). The catalysed reaction is 1-hexadecanoyl-sn-glycero-3-phosphocholine + H2O = sn-glycerol 3-phosphocholine + hexadecanoate + H(+). It catalyses the reaction 1,3-di-(9Z-octadecenoyl)-glycerol + H2O = 3-(9Z-octadecenoyl)-sn-glycerol + (9Z)-octadecenoate + H(+). The enzyme catalyses 1,2,3-tri-(9Z-octadecenoyl)-glycerol + H2O = di-(9Z)-octadecenoylglycerol + (9Z)-octadecenoate + H(+). It carries out the reaction 1,2-di-(9Z-octadecenoyl)-sn-glycero-3-phosphocholine + H2O = (9Z-octadecenoyl)-sn-glycero-3-phosphocholine + (9Z)-octadecenoate + H(+). The catalysed reaction is 1,2,3-tributanoylglycerol + H2O = dibutanoylglycerol + butanoate + H(+). It catalyses the reaction 1,2-dihexadecanoyl-sn-glycero-3-phosphocholine + H2O = hexadecanoyl-sn-glycero-3-phosphocholine + hexadecanoate + H(+). With respect to regulation, phospholipase A1 and lysophospholipase activities are inhibited by annexin II. In terms of biological role, catalyzes the hydrolysis of triglycerides and phospholipids present in circulating plasma lipoproteins, including chylomicrons, intermediate density lipoproteins (IDL), low density lipoproteins (LDL) of large size and high density lipoproteins (HDL), releasing free fatty acids (FFA) and smaller lipoprotein particles. Also exhibits lysophospholipase activity. Can hydrolyze both neutral lipid and phospholipid substrates but shows a greater binding affinity for neutral lipid substrates than phospholipid substrates. In native LDL, preferentially hydrolyzes the phosphatidylcholine species containing polyunsaturated fatty acids at sn-2 position. This Rattus norvegicus (Rat) protein is Hepatic triacylglycerol lipase (Lipc).